We begin with the raw amino-acid sequence, 162 residues long: Phospholipase A and acyltransferase 3 (162 aa).

Over 1–133 the chain is Cytoplasmic; the sequence is MLAPIPEPKP…VPRSDQVRDA (133 aa). The region spanning 13-129 is the LRAT domain; it reads LIEIFRPMYR…LRYGVPRSDQ (117 aa). Active-site residues include His23 and His35. Catalysis depends on Cys113, which acts as the Acyl-thioester intermediate. Residues 134–154 traverse the membrane as a helical segment; that stretch reads VKAVGIAGVGLAALGLVGVML. Topologically, residues 155–162 are lumenal; sequence SRNKKQKQ.

This sequence belongs to the H-rev107 family. Interacts with PPP2R1A; this interaction might decrease PP2A activity. In terms of tissue distribution, ubiquitously expressed in normal tissues but down-regulated in primary carcinomas or in many cell lines derived from tumors. Highly expressed in white adipose tissue and in adipocytes. Expressed at lower levels in brown adipose tissue.

The protein localises to the cell membrane. Its subcellular location is the cytoplasm. The protein resides in the cytosol. It localises to the perinuclear region. It is found in the peroxisome membrane. The protein localises to the mitochondrion membrane. Its subcellular location is the nucleus envelope. The protein resides in the lysosome membrane. It localises to the endoplasmic reticulum membrane. The enzyme catalyses a 1,2-diacyl-sn-glycero-3-phosphocholine + H2O = a 1-acyl-sn-glycero-3-phosphocholine + a fatty acid + H(+). It carries out the reaction a 1,2-diacyl-sn-glycero-3-phosphocholine + H2O = a 2-acyl-sn-glycero-3-phosphocholine + a fatty acid + H(+). The catalysed reaction is 1,2-dihexadecanoyl-sn-glycero-3-phosphocholine + H2O = 1-hexadecanoyl-sn-glycero-3-phosphocholine + hexadecanoate + H(+). It catalyses the reaction 1,2-dihexadecanoyl-sn-glycero-3-phosphocholine + H2O = 2-hexadecanoyl-sn-glycero-3-phosphocholine + hexadecanoate + H(+). The enzyme catalyses 1-hexadecanoyl-2-(9Z-octadecenoyl)-sn-glycero-3-phosphocholine + H2O = 2-(9Z-octadecenoyl)-sn-glycero-3-phosphocholine + hexadecanoate + H(+). It carries out the reaction 1-hexadecanoyl-2-(9Z-octadecenoyl)-sn-glycero-3-phosphocholine + H2O = 1-hexadecanoyl-sn-glycero-3-phosphocholine + (9Z)-octadecenoate + H(+). The catalysed reaction is 1-hexadecanoyl-2-(5Z,8Z,11Z,14Z-eicosatetraenoyl)-sn-glycero-3-phosphocholine + H2O = 1-hexadecanoyl-sn-glycero-3-phosphocholine + (5Z,8Z,11Z,14Z)-eicosatetraenoate + H(+). It catalyses the reaction 1-hexadecanoyl-2-(5Z,8Z,11Z,14Z-eicosatetraenoyl)-sn-glycero-3-phosphocholine + H2O = 2-(5Z,8Z,11Z,14Z)-eicosatetraenoyl-sn-glycero-3-phosphocholine + hexadecanoate + H(+). The enzyme catalyses 1-hexadecanoyl-2-(9Z,12Z-octadecadienoyl)-sn-glycero-3-phosphoethanolamine + H2O = 1-hexadecanoyl-sn-glycero-3-phosphoethanolamine + (9Z,12Z)-octadecadienoate + H(+). It carries out the reaction 1-hexadecanoyl-2-(9Z,12Z-octadecadienoyl)-sn-glycero-3-phosphoethanolamine + H2O = 2-(9Z,12Z)-octadecadienoyl-sn-glycero-3-phosphoethanolamine + hexadecanoate + H(+). The catalysed reaction is 1-hexadecanoyl-2-(5Z,8Z,11Z,14Z-eicosatetraenoyl)-sn-glycero-3-phosphoethanolamine + H2O = 1-hexadecanoyl-sn-glycero-3-phosphoethanolamine + (5Z,8Z,11Z,14Z)-eicosatetraenoate + H(+). It catalyses the reaction 1-hexadecanoyl-2-(5Z,8Z,11Z,14Z-eicosatetraenoyl)-sn-glycero-3-phosphoethanolamine + H2O = 2-(5Z,8Z,11Z,14Z)-eicosatetraenoyl-sn-glycero-3-phosphoethanolamine + hexadecanoate + H(+). The enzyme catalyses 1-hexanoyl-2-acyl-sn-glycero-3-phosphocholine + H2O = hexanoate + a 2-acyl-sn-glycero-3-phosphocholine + H(+). It carries out the reaction 1-hexanoyl-2-acyl-sn-glycero-3-phosphocholine + H2O = 1-hexanoyl-sn-glycero-3-phosphocholine + a fatty acid + H(+). The catalysed reaction is 1,2-diheptadecanoyl-sn-glycero-3-phosphoethanolamine + 1-(9Z-octadecenoyl)-2-hexadecanoyl-sn-glycero-3-phosphocholine = 1,2-diheptadecanoyl-sn-glycero-3-phospho-N-hexadecanoyl-ethanolamine + 1-(9Z-octadecenoyl)-sn-glycero-3-phosphocholine + H(+). It catalyses the reaction 1,2-diheptadecanoyl-sn-glycero-3-phosphoethanolamine + 1-(9Z-octadecenoyl)-2-hexadecanoyl-sn-glycero-3-phosphocholine = 1,2-diheptadecanoyl-sn-glycero-3-phospho-N-(9Z-octadecenoyl)-ethanolamine + 2-hexadecanoyl-sn-glycero-3-phosphocholine + H(+). The enzyme catalyses 1,2-dihexanoyl-sn-glycero-3-phosphoethanolamine + 2-heptanoyl-sn-glycero-3-phosphocholine = hexanoyl-sn-glycero-3-phosphoethanolamine + 1-hexanoyl-2-heptanoyl-sn-glycero-3-phosphocholine. It carries out the reaction 1-hexadecanoyl-2-octadecanoyl-sn-glycero-3-phosphocholine + H2O = octadecanoate + 1-hexadecanoyl-sn-glycero-3-phosphocholine + H(+). The catalysed reaction is 1-hexadecanoyl-2-octadecanoyl-sn-glycero-3-phosphocholine + H2O = 2-octadecanoyl-sn-glycero-3-phosphocholine + hexadecanoate + H(+). It catalyses the reaction 1-octadecanoyl-2-hexadecanoyl-sn-glycero-3-phosphocholine + H2O = 1-octadecanoyl-sn-glycero-3-phosphocholine + hexadecanoate + H(+). The enzyme catalyses 1-octadecanoyl-2-hexadecanoyl-sn-glycero-3-phosphocholine + H2O = 2-hexadecanoyl-sn-glycero-3-phosphocholine + octadecanoate + H(+). It carries out the reaction 1-hexadecanoyl-2-(9Z,12Z-octadecadienoyl)-sn-glycero-3-phosphocholine + H2O = (9Z,12Z)-octadecadienoate + 1-hexadecanoyl-sn-glycero-3-phosphocholine + H(+). The catalysed reaction is 1-hexadecanoyl-2-(9Z,12Z-octadecadienoyl)-sn-glycero-3-phosphocholine + H2O = 2-(9Z,12Z-octadecadienoyl)-sn-glycero-3-phosphocholine + hexadecanoate + H(+). It catalyses the reaction 1,2-di-(9Z-octadecenoyl)-sn-glycero-3-phosphocholine + H2O = 2-(9Z-octadecenoyl)-sn-glycero-3-phosphocholine + (9Z)-octadecenoate + H(+). The enzyme catalyses 1,2-dihexadecanoyl-sn-glycero-3-phosphocholine + H2O = hexadecanoyl-sn-glycero-3-phosphocholine + hexadecanoate + H(+). It carries out the reaction 1,2-di-(9Z-octadecenoyl)-sn-glycero-3-phosphocholine + H2O = 1-(9Z-octadecenoyl)-sn-glycero-3-phosphocholine + (9Z)-octadecenoate + H(+). The catalysed reaction is 1,2-di-(9Z-octadecenoyl)-sn-glycero-3-phosphoethanolamine + 1,2-dihexadecanoyl-sn-glycero-3-phosphocholine = hexadecanoyl-sn-glycero-3-phosphocholine + N-hexadecanoyl-1,2-di-(9Z-octadecenoyl)-sn-glycero-3-phosphoethanolamine + H(+). It catalyses the reaction 1,2-di-(9Z,12Z-octadecadienoyl)-sn-glycero-3-phosphocholine + H2O = 1-(9Z,12Z)-octadecadienoyl-sn-glycero-3-phosphocholine + (9Z,12Z)-octadecadienoate + H(+). In terms of biological role, exhibits both phospholipase A1/2 and acyltransferase activities. Shows phospholipase A1 (PLA1) and A2 (PLA2), catalyzing the calcium-independent release of fatty acids from the sn-1 or sn-2 position of glycerophospholipids. For most substrates, PLA1 activity is much higher than PLA2 activity. Shows O-acyltransferase activity, catalyzing the transfer of a fatty acyl group from glycerophospholipid to the hydroxyl group of lysophospholipid. Shows N-acyltransferase activity,catalyzing the calcium-independent transfer of a fatty acyl group at the sn-1 position of phosphatidylcholine (PC) and other glycerophospholipids to the primary amine of phosphatidylethanolamine (PE), forming N-acylphosphatidylethanolamine (NAPE), which serves as precursor for N-acylethanolamines (NAEs). Exhibits high N-acyltransferase activity and low phospholipase A1/2 activity. Required for complete organelle rupture and degradation that occur during eye lens terminal differentiation, when fiber cells that compose the lens degrade all membrane-bound organelles in order to provide lens with transparency to allow the passage of light. Organelle membrane degradation is probably catalyzed by the phospholipase activity. (Microbial infection) Acts as a host factor for picornaviruses: required during early infection to promote viral genome release into the cytoplasm. In Mus musculus (Mouse), this protein is Phospholipase A and acyltransferase 3.